Consider the following 81-residue polypeptide: MNQEIFEKVKSIVVEQLEVEEDTVTPEANFANDLGADSLDTVELVMALEEEFDIEIPDEAAENIGTVQAAVDYIEKEQAKA.

The 76-residue stretch at 3 to 78 (QEIFEKVKSI…AAVDYIEKEQ (76 aa)) folds into the Carrier domain. Serine 38 carries the post-translational modification O-(pantetheine 4'-phosphoryl)serine.

The protein belongs to the acyl carrier protein (ACP) family. Post-translationally, 4'-phosphopantetheine is transferred from CoA to a specific serine of apo-ACP by AcpS. This modification is essential for activity because fatty acids are bound in thioester linkage to the sulfhydryl of the prosthetic group.

It localises to the cytoplasm. Its pathway is lipid metabolism; fatty acid biosynthesis. In terms of biological role, carrier of the growing fatty acid chain in fatty acid biosynthesis. This Crocosphaera subtropica (strain ATCC 51142 / BH68) (Cyanothece sp. (strain ATCC 51142)) protein is Acyl carrier protein.